The sequence spans 480 residues: MPVSGEAFLGLLPELVATGFLLVVLLGGVFAGPRSEALVAALAGLGTLASFAAAAGLLAAGFSGTFFGGGYAVDPFALYFKLIITATAFFTVIAAARWAERTGDAPEYMTLIIAVALGGMLLVSMRDLFGVFLAVELATIPSYAMVAFDRRRRESAEGGMKYLITGVIASSFLLYGIVLIYGVSGSANLSRVAEAFGEGLSPVAIVGLVLMISGLAFKVSAAPFHFWTPDAYQGAPTSAAAFLSVAPKAAIFAALLRILLDGMPQAAPTWTALMAVIAIVTMFVGNLLALRQSNVRRMLAYSSVAHSGYILAAFAALQGDAVSSGVQAVMIYSAAYAVMNLGAFLTIDLVGEEAKSFNGLFATRPMLAAAMAVFMAALVGIPPLSGFFGKAWVIYAGAGSGSALVYVAVAALVVNSVLSVPYYFGIIRNMFQEEPVSAGGPAKKGDGGVAFTVYAMALLTALFFLGVGPLAALAAGSGLL.

The next 14 helical transmembrane spans lie at 11-31, 38-58, 76-96, 105-125, 128-148, 163-183, 195-215, 240-260, 270-290, 298-318, 329-349, 368-388, 407-427, and 453-473; these read LLPELVATGFLLVVLLGGVFA, LVAALAGLGTLASFAAAAGLL, FALYFKLIITATAFFTVIAAA, APEYMTLIIAVALGGMLLVSM, LFGVFLAVELATIPSYAMVAF, LITGVIASSFLLYGIVLIYGV, AFGEGLSPVAIVGLVLMISGL, AAFLSVAPKAAIFAALLRILL, WTALMAVIAIVTMFVGNLLAL, MLAYSSVAHSGYILAAFAALQ, VMIYSAAYAVMNLGAFLTIDL, AAAMAVFMAALVGIPPLSGFF, VAVAALVVNSVLSVPYYFGII, and VYAMALLTALFFLGVGPLAAL.

The protein belongs to the complex I subunit 2 family. In terms of assembly, NDH-1 is composed of 14 different subunits. Subunits NuoA, H, J, K, L, M, N constitute the membrane sector of the complex.

Its subcellular location is the cell membrane. It catalyses the reaction a quinone + NADH + 5 H(+)(in) = a quinol + NAD(+) + 4 H(+)(out). In terms of biological role, NDH-1 shuttles electrons from NADH, via FMN and iron-sulfur (Fe-S) centers, to quinones in the respiratory chain. The immediate electron acceptor for the enzyme in this species is believed to be a menaquinone. Couples the redox reaction to proton translocation (for every two electrons transferred, four hydrogen ions are translocated across the cytoplasmic membrane), and thus conserves the redox energy in a proton gradient. In Rubrobacter xylanophilus (strain DSM 9941 / JCM 11954 / NBRC 16129 / PRD-1), this protein is NADH-quinone oxidoreductase subunit N.